A 98-amino-acid polypeptide reads, in one-letter code: DNA-binding protein HU (98 aa).

It belongs to the bacterial histone-like protein family. Homodimer.

Histone-like DNA-binding protein which is capable of wrapping DNA to stabilize it, and thus to prevent its denaturation under extreme environmental conditions. The polypeptide is DNA-binding protein HU (hup) (Campylobacter jejuni subsp. jejuni serotype O:2 (strain ATCC 700819 / NCTC 11168)).